The sequence spans 309 residues: Protein FdhE (309 aa).

It belongs to the FdhE family.

Its subcellular location is the cytoplasm. Necessary for formate dehydrogenase activity. The chain is Protein FdhE from Escherichia coli O139:H28 (strain E24377A / ETEC).